Reading from the N-terminus, the 254-residue chain is Probable derlin-2 homolog (254 aa).

Residues Met-1–Lys-17 are Cytoplasmic-facing. The chain crosses the membrane as a helical span at residues Ile-18–Leu-38. Residues Arg-39–Asp-95 lie on the Lumenal side of the membrane. A helical membrane pass occupies residues Tyr-96 to Tyr-116. The Cytoplasmic portion of the chain corresponds to Thr-117–Lys-118. A helical transmembrane segment spans residues Ile-119–Ser-139. Residues Arg-140–His-146 are Lumenal-facing. A helical membrane pass occupies residues Ile-147–Met-167. Over Gly-168–Gln-254 the chain is Cytoplasmic.

This sequence belongs to the derlin family.

It is found in the endoplasmic reticulum membrane. Functionally, may be involved in the degradation process of specific misfolded endoplasmic reticulum (ER) luminal proteins. May also be involved in endoplasmic reticulum stress-induced pre-emptive quality control, a mechanism that selectively attenuates the translocation of newly synthesized proteins into the endoplasmic reticulum and reroutes them to the cytosol for proteasomal degradation. The chain is Probable derlin-2 homolog (derl2) from Dictyostelium discoideum (Social amoeba).